Consider the following 105-residue polypeptide: uncharacterized protein (105 aa).

The span at 31 to 47 (SVNLPSPSVKPSVTPSV) shows a compositional bias: low complexity. A disordered region spans residues 31 to 80 (SVNLPSPSVKPSVTPSVKKPPHVIRSDYSKPREKPAKVAKKPTVKNDKKP). Over residues 54-66 (IRSDYSKPREKPA) the composition is skewed to basic and acidic residues.

This is an uncharacterized protein from Caenorhabditis elegans.